Consider the following 916-residue polypeptide: Transmembrane channel-like protein 2-A (916 aa).

Residues 1 to 13 (MPKKSDTTRKLED) are compositionally biased toward basic and acidic residues. The tract at residues 1–159 (MPKKSDTTRK…DEEDESMSEG (159 aa)) is disordered. The Cytoplasmic portion of the chain corresponds to 1 to 271 (MPKKSDTTRK…IFLRWMYGMN (271 aa)). Acidic residues predominate over residues 14–26 (VGIEIDGDVDSAE). Composition is skewed to basic residues over residues 31 to 45 (SKGK…GKRG) and 62 to 72 (KGRRAANKKKP). Basic and acidic residues predominate over residues 97–107 (NVRERGDGDKK). Residues 108–117 (KSGKKGRRGG) are compositionally biased toward basic residues. Positions 118–138 (KKNEKGKGKDSDKDSDKDEKK) are enriched in basic and acidic residues. The segment covering 145-157 (DESDSDEEDESMS) has biased composition (acidic residues). The chain crosses the membrane as a helical span at residues 272-292 (LVLFSLTFGLVVIPEVLMGLP). At 293 to 344 (YGSIPRKTVPREDQDTAMDYSVLTDFNGYCKYSVLFYGYYNNQRTIGFLKFR) the chain is on the extracellular side. The chain crosses the membrane as a helical span at residues 345-365 (LPLSYLMVGIGTFGYSLMVVI). The Cytoplasmic portion of the chain corresponds to 366-438 (RTMAKNADVG…ENIHLRRFLR (73 aa)). A helical transmembrane segment spans residues 439–459 (VLANFLITCTLGGSGYLIYFV). The Extracellular portion of the chain corresponds to 460–478 (VKRSQEFQNMDNLSWYEKN). The helical transmembrane segment at 479–499 (ELEIIMSLLGLVGPMLFETIA) threads the bilayer. The Cytoplasmic segment spans residues 500–516 (ELEEYHPRIALKWQLGR). A helical membrane pass occupies residues 517-537 (IFALFLGNLYTFLLALFDEVN). Topologically, residues 538 to 649 (AKLEEEESIK…EFDISGNVLG (112 aa)) are extracellular. Residues 650-670 (LVFNQGMIWMGAFYAPGLVGI) traverse the membrane as a helical segment. At 671–704 (NVLRLLSSMYYQCWAVMACNVPHERVFKASKSNN) the chain is on the cytoplasmic side. A helical transmembrane segment spans residues 705–725 (FYMGLLLLILFLSLLPVVYTI). Residues 726–762 (MSLPPSFDCGPFSGKERMFDVVMETIDLDLPAFMGTL) lie on the Extracellular side of the membrane. A helical transmembrane segment spans residues 763–783 (FGYVANPGLVISAVLLMVLAI). Over 784–916 (YYLNSVSEAY…RGQGPPPRRQ (133 aa)) the chain is Cytoplasmic. Positions 804–818 (MQMARDEEKNRRNNK) are enriched in basic and acidic residues. The tract at residues 804–916 (MQMARDEEKN…RGQGPPPRRQ (113 aa)) is disordered. Low complexity predominate over residues 883 to 892 (ARGPVTRAPG).

The protein belongs to the TMC family. Interacts (via N-terminus) with both isoforms CD1 and CD3 of PCDH15A (via cytoplasmic domain); this interaction is required for mechanotransduction of the hair cells and correct localization of PCDH15A in hair bundles of the hair cells. In adults, expression is restricted to the hair cells of inner ear and lateral line organ. Expressed at higher levels in the larval inner ear than in the lateral-line neuromasts.

Its subcellular location is the cell membrane. It catalyses the reaction Ca(2+)(in) = Ca(2+)(out). In terms of biological role, pore-forming subunit of the mechanotransducer (MET) non-selective cation channel complex located at tips of hair-cell stereocilia. Highly permeable to calcium and likely transports monovalent cations. This Danio rerio (Zebrafish) protein is Transmembrane channel-like protein 2-A.